The chain runs to 374 residues: Succinyl-diaminopimelate desuccinylase (374 aa).

Residue histidine 66 participates in Zn(2+) binding. Aspartate 68 is a catalytic residue. Zn(2+) is bound at residue aspartate 99. The Proton acceptor role is filled by glutamate 133. Zn(2+) contacts are provided by glutamate 134, glutamate 162, and histidine 348.

It belongs to the peptidase M20A family. DapE subfamily. In terms of assembly, homodimer. It depends on Zn(2+) as a cofactor. Requires Co(2+) as cofactor.

The enzyme catalyses N-succinyl-(2S,6S)-2,6-diaminopimelate + H2O = (2S,6S)-2,6-diaminopimelate + succinate. It functions in the pathway amino-acid biosynthesis; L-lysine biosynthesis via DAP pathway; LL-2,6-diaminopimelate from (S)-tetrahydrodipicolinate (succinylase route): step 3/3. Functionally, catalyzes the hydrolysis of N-succinyl-L,L-diaminopimelic acid (SDAP), forming succinate and LL-2,6-diaminopimelate (DAP), an intermediate involved in the bacterial biosynthesis of lysine and meso-diaminopimelic acid, an essential component of bacterial cell walls. The sequence is that of Succinyl-diaminopimelate desuccinylase from Coxiella burnetii (strain CbuK_Q154) (Coxiella burnetii (strain Q154)).